Consider the following 520-residue polypeptide: Cholesterol side-chain cleavage enzyme, mitochondrial (520 aa).

The N-terminal 39 residues, 1 to 39 (MLARGLPFRSALVKACPPLLNTGREGWGHHRVGTGEGAG), are a transit peptide targeting the mitochondrion. The tract at residues 27–47 (WGHHRVGTGEGAGISTRTPRP) is disordered. Heme is bound at residue Cys-461.

This sequence belongs to the cytochrome P450 family. In terms of assembly, interacts with FDX1/adrenodoxin. Requires heme as cofactor.

It is found in the mitochondrion inner membrane. It carries out the reaction 6 reduced [adrenodoxin] + cholesterol + 3 O2 + 6 H(+) = 4-methylpentanal + pregnenolone + 6 oxidized [adrenodoxin] + 4 H2O. It catalyses the reaction 2 reduced [adrenodoxin] + cholesterol + O2 + 2 H(+) = (22R)-hydroxycholesterol + 2 oxidized [adrenodoxin] + H2O. The catalysed reaction is (22R)-hydroxycholesterol + 2 reduced [adrenodoxin] + O2 + 2 H(+) = (20R,22R)-20,22-dihydroxycholesterol + 2 oxidized [adrenodoxin] + H2O. The enzyme catalyses (20R,22R)-20,22-dihydroxycholesterol + 2 reduced [adrenodoxin] + O2 + 2 H(+) = 4-methylpentanal + pregnenolone + 2 oxidized [adrenodoxin] + 2 H2O. Its pathway is lipid metabolism; C21-steroid hormone metabolism. It functions in the pathway steroid metabolism; cholesterol metabolism. Functionally, a cytochrome P450 monooxygenase that catalyzes the side-chain hydroxylation and cleavage of cholesterol to pregnenolone, the precursor of most steroid hormones. Catalyzes three sequential oxidation reactions of cholesterol, namely the hydroxylation at C22 followed with the hydroxylation at C20 to yield 20R,22R-hydroxycholesterol that is further cleaved between C20 and C22 to yield the C21-steroid pregnenolone and 4-methylpentanal. Mechanistically, uses molecular oxygen inserting one oxygen atom into a substrate and reducing the second into a water molecule. Two electrons are provided by NADPH via a two-protein mitochondrial transfer system comprising flavoprotein FDXR (adrenodoxin/ferredoxin reductase) and nonheme iron-sulfur protein FDX1 or FDX2 (adrenodoxin/ferredoxin). This is Cholesterol side-chain cleavage enzyme, mitochondrial from Ovis aries (Sheep).